The sequence spans 342 residues: Aristolochene synthase prx2 (342 aa).

Residues aspartate 115, asparagine 244, serine 248, and glutamate 252 each coordinate Mg(2+). Positions 340 and 341 each coordinate (2E,6E)-farnesyl diphosphate.

The protein belongs to the terpene synthase family. In terms of assembly, homodimer. Requires Mg(2+) as cofactor.

The catalysed reaction is (2E,6E)-farnesyl diphosphate = (+)-aristolochene + diphosphate. It functions in the pathway sesquiterpene biosynthesis; aristolochene biosynthesis; aristolochene from farnesyl diphosphate: step 1/1. In terms of biological role, aristolochene synthase; part of the gene cluster that mediates the biosynthesis of PR-toxin, a bicyclic sesquiterpene belonging to the eremophilane class and acting as a mycotoxin. The first step of the pathway is catalyzed by the aristolochene synthase which performs the cyclization of trans,trans-farnesyl diphosphate (FPP) to the bicyclic sesquiterpene aristolochene. Following the formation of aristolochene, the non-oxygenated aristolochene is converted to the trioxygenated intermediate eremofortin B, via 7-epi-neopetasone. This conversion appears to involve three enzymes, a hydroxysterol oxidase-like enzyme, the quinone-oxidase prx3 that forms the quinone-type-structure in the bicyclic nucleus of aristolochene with the C8-oxo group and the C-3 hydroxyl group, and the P450 monooxygenase prx9 that introduces the epoxide at the double bond between carbons 1 and 2. No monoxy or dioxy-intermediates have been reported to be released to the broth, so these three early oxidative reactions may be coupled together. Eremofortin B is further oxidized by another P450 monooxygenase, that introduces a second epoxide between carbons 7 and 11 prior to acetylation to eremofortin A by the acetyltransferase prx11. The second epoxidation may be performed by a second P450 monooxygenase. After the acetylation step, the conversion of eremofortin A to eremofortin C and then to PR-toxin requires only two enzymes. First the conversion of eremofortin A to eremofortin C proceeds by oxidation of the side chain of the molecule at C-12 and is catalyzed by the short-chain oxidoreductase prx1. The cytochrome P450 monooxygenase prx8 also plays a role in this step. The primary alcohol formed at C-12 is finally oxidized by the short-chain alcohol dehydrogenase prx4 that forms PR-toxin. The protein is Aristolochene synthase prx2 of Penicillium rubens (strain ATCC 28089 / DSM 1075 / NRRL 1951 / Wisconsin 54-1255) (Penicillium chrysogenum).